Consider the following 105-residue polypeptide: Oxytocin-neurophysin 1 (105 aa).

A disulfide bridge connects residues C1 and C6. Position 9 is a glycine amide (G9). 7 disulfide bridges follow: C22–C66, C25–C39, C33–C56, C40–C46, C73–C85, C79–C97, and C86–C91.

The protein belongs to the vasopressin/oxytocin family. As to quaternary structure, interacts with oxytocin receptor (Ki=1.5 nM). Interacts with vasopressin V1aR/AVPR1A (Ki=37 nM), V1bR/AVPR1B (Ki=222 nM), and V2R/AVPR2 receptors (Ki=823 nM).

Its subcellular location is the secreted. In terms of biological role, neurophysin 1 specifically binds oxytocin. Oxytocin causes contraction of the smooth muscle of the uterus and of the mammary gland. Acts by binding to oxytocin receptor (OXTR). The sequence is that of Oxytocin-neurophysin 1 (OXT) from Equus caballus (Horse).